Consider the following 392-residue polypeptide: Selenide, water dikinase 1 (392 aa).

Ser2 is subject to N-acetylserine. Cys31 is a catalytic residue. ATP contacts are provided by residues Lys32, Gly67–Asp69, Asp87, Asp110, and Gly161–Thr164. Asp69 is a Mg(2+) binding site. Asp110 is a binding site for Mg(2+). Position 265 (Asp265) interacts with Mg(2+).

It belongs to the selenophosphate synthase 1 family. Class II subfamily. In terms of assembly, homodimer. Mg(2+) serves as cofactor.

The protein resides in the cell membrane. It localises to the nucleus membrane. It catalyses the reaction hydrogenselenide + ATP + H2O = selenophosphate + AMP + phosphate + 2 H(+). Functionally, synthesizes selenophosphate from selenide and ATP. The polypeptide is Selenide, water dikinase 1 (Sephs1) (Mus musculus (Mouse)).